The primary structure comprises 248 residues: Transcriptional activator protein FnrL (248 aa).

One can recognise an HTH crp-type domain in the interval 154 to 232; the sequence is KTAREKIASL…KRHVIVTDFA (79 aa). A DNA-binding region (H-T-H motif) is located at residues 191-210; the sequence is REEMADYLGLTLETVSRQVS.

Its function is as follows. Anaerobic regulatory protein; transcriptional activator of hemA. Appears to regulate other genes. This chain is Transcriptional activator protein FnrL (fnrL), found in Cereibacter sphaeroides (strain ATCC 17023 / DSM 158 / JCM 6121 / CCUG 31486 / LMG 2827 / NBRC 12203 / NCIMB 8253 / ATH 2.4.1.) (Rhodobacter sphaeroides).